Here is a 467-residue protein sequence, read N- to C-terminus: Mothers against decapentaplegic homolog 9 (467 aa).

The region spanning 16–140 is the MH1 domain; that stretch reads PAVKRLLGWK…YRRVETPVLP (125 aa). Residues cysteine 68, cysteine 113, cysteine 125, and histidine 130 each coordinate Zn(2+). The interval 174-246 is disordered; that stretch reads NATYPDSFQQ…SETQSGQPVD (73 aa). Residues 205–220 are compositionally biased toward low complexity; sequence SYPHSPGSPSEPESPY. Residues 273–467 form the MH2 domain; sequence WCSVAYYELN…SPHNPISSVS (195 aa).

The protein belongs to the dwarfin/SMAD family. As to quaternary structure, interaction with the co-SMAD SMAD4. Interacts with PEBP2-alpha subunit. Interacts with RANBP3L. Post-translationally, phosphorylated on serine by BMP (bone morphogenetic proteins) type 1 receptor kinase. As to expression, expressed in heart, brain, placenta, lung, skeletal muscle, prostate, testis, ovary and small intestine. Also expressed in fetal brain, lung and kidney.

It localises to the cytoplasm. It is found in the nucleus. In terms of biological role, transcriptional modulator activated by BMP (bone morphogenetic proteins) type 1 receptor kinase. SMAD9 is a receptor-regulated SMAD (R-SMAD). This Homo sapiens (Human) protein is Mothers against decapentaplegic homolog 9 (SMAD9).